Consider the following 551-residue polypeptide: Adenylosuccinate synthetase (551 aa).

GTP contacts are provided by residues 131–137 and 159–161; these read GDEGKGK and GHT. Residue Asp-132 is the Proton acceptor of the active site. Asp-132 and Gly-159 together coordinate Mg(2+). IMP contacts are provided by residues 132-135, 157-160, Thr-248, Arg-262, Asn-339, Thr-354, and Arg-418; these read DEGK and NAGH. His-160 serves as the catalytic Proton donor. 414–420 contributes to the substrate binding site; the sequence is TTTGRAR. Residues Arg-420, 446 to 448, and 528 to 530 contribute to the GTP site; these read KLD and GVG.

Belongs to the adenylosuccinate synthetase family. In terms of assembly, homodimer. Mg(2+) serves as cofactor.

Its subcellular location is the cytoplasm. It catalyses the reaction IMP + L-aspartate + GTP = N(6)-(1,2-dicarboxyethyl)-AMP + GDP + phosphate + 2 H(+). Its pathway is purine metabolism; AMP biosynthesis via de novo pathway; AMP from IMP: step 1/2. Plays an important role in the de novo pathway and in the salvage pathway of purine nucleotide biosynthesis. Catalyzes the first committed step in the biosynthesis of AMP from IMP. The protein is Adenylosuccinate synthetase of Phytophthora infestans (strain T30-4) (Potato late blight agent).